A 273-amino-acid polypeptide reads, in one-letter code: Energy-coupling factor transporter ATP-binding protein EcfA (273 aa).

The 236-residue stretch at 2–237 folds into the ABC transporter domain; sequence ISIRDLTYFY…RASLLALGLA (236 aa). 36-43 is an ATP binding site; that stretch reads GRNGSGKS.

This sequence belongs to the ABC transporter superfamily. Energy-coupling factor EcfA family. Forms a stable energy-coupling factor (ECF) transporter complex composed of 2 membrane-embedded substrate-binding proteins (S component), 2 ATP-binding proteins (A component) and 2 transmembrane proteins (T component).

Its subcellular location is the cell membrane. ATP-binding (A) component of a common energy-coupling factor (ECF) ABC-transporter complex. Unlike classic ABC transporters this ECF transporter provides the energy necessary to transport a number of different substrates. The chain is Energy-coupling factor transporter ATP-binding protein EcfA from Syntrophomonas wolfei subsp. wolfei (strain DSM 2245B / Goettingen).